The following is a 607-amino-acid chain: UvrABC system protein C (607 aa).

The GIY-YIG domain occupies 16-94 (GRPGVYRMFD…IKEWRPPYNI (79 aa)). Residues 203 to 238 (QQLGNELNAEMEKAAMALDFEKAAELRDQIALLRRV) form the UVR domain.

Belongs to the UvrC family. As to quaternary structure, interacts with UvrB in an incision complex.

The protein localises to the cytoplasm. The UvrABC repair system catalyzes the recognition and processing of DNA lesions. UvrC both incises the 5' and 3' sides of the lesion. The N-terminal half is responsible for the 3' incision and the C-terminal half is responsible for the 5' incision. This Pseudomonas putida (strain ATCC 47054 / DSM 6125 / CFBP 8728 / NCIMB 11950 / KT2440) protein is UvrABC system protein C.